Here is a 612-residue protein sequence, read N- to C-terminus: Glucoamylase (612 aa).

Residues 1–19 (MVSFSSCLRALALGSSVLA) form the signal peptide. Positions 20–25 (VQPVLR) are excised as a propeptide. A glycan (N-linked (GlcNAc...) asparagine) is linked at asparagine 39. Tryptophan 146 serves as a coordination point for substrate. The active-site Proton acceptor is aspartate 202. The active-site Proton donor is glutamate 205. 3 disulfides stabilise this stretch: cysteine 236–cysteine 239, cysteine 248–cysteine 475, and cysteine 288–cysteine 296. Residues 506–612 (CQVPTTVSVT…KSAVQSDVWR (107 aa)) enclose the CBM20 domain.

This sequence belongs to the glycosyl hydrolase 15 family.

It catalyses the reaction Hydrolysis of terminal (1-&gt;4)-linked alpha-D-glucose residues successively from non-reducing ends of the chains with release of beta-D-glucose.. This chain is Glucoamylase (glaA), found in Aspergillus oryzae (strain ATCC 42149 / RIB 40) (Yellow koji mold).